Here is a 119-residue protein sequence, read N- to C-terminus: uncharacterized protein (119 aa).

This is an uncharacterized protein from Methanocaldococcus jannaschii (strain ATCC 43067 / DSM 2661 / JAL-1 / JCM 10045 / NBRC 100440) (Methanococcus jannaschii).